The following is a 382-amino-acid chain: 8-amino-7-oxononanoate synthase (382 aa).

R26 provides a ligand contact to substrate. 104 to 105 (GY) contacts pyridoxal 5'-phosphate. Residue H129 coordinates substrate. Pyridoxal 5'-phosphate-binding positions include S175, 200 to 203 (DEAH), and 232 to 235 (TLSK). At K235 the chain carries N6-(pyridoxal phosphate)lysine. T345 lines the substrate pocket.

It belongs to the class-II pyridoxal-phosphate-dependent aminotransferase family. BioF subfamily. Homodimer. Pyridoxal 5'-phosphate is required as a cofactor.

The catalysed reaction is 6-carboxyhexanoyl-[ACP] + L-alanine + H(+) = (8S)-8-amino-7-oxononanoate + holo-[ACP] + CO2. It participates in cofactor biosynthesis; biotin biosynthesis. Functionally, catalyzes the decarboxylative condensation of pimeloyl-[acyl-carrier protein] and L-alanine to produce 8-amino-7-oxononanoate (AON), [acyl-carrier protein], and carbon dioxide. In Mycobacterium sp. (strain JLS), this protein is 8-amino-7-oxononanoate synthase.